The following is a 186-amino-acid chain: Orotate phosphoribosyltransferase (186 aa).

Residues Arg-96, Lys-100, His-102, and 121–129 (DDVATTGTS) each bind 5-phospho-alpha-D-ribose 1-diphosphate. Thr-125 and Arg-153 together coordinate orotate.

Belongs to the purine/pyrimidine phosphoribosyltransferase family. PyrE subfamily. In terms of assembly, homodimer. Mg(2+) serves as cofactor.

The catalysed reaction is orotidine 5'-phosphate + diphosphate = orotate + 5-phospho-alpha-D-ribose 1-diphosphate. Its pathway is pyrimidine metabolism; UMP biosynthesis via de novo pathway; UMP from orotate: step 1/2. Catalyzes the transfer of a ribosyl phosphate group from 5-phosphoribose 1-diphosphate to orotate, leading to the formation of orotidine monophosphate (OMP). The sequence is that of Orotate phosphoribosyltransferase from Aeropyrum pernix (strain ATCC 700893 / DSM 11879 / JCM 9820 / NBRC 100138 / K1).